Consider the following 190-residue polypeptide: Ribonuclease HII (190 aa).

The region spanning 3 to 190 (KLIAGVDEVG…KPVKALLEEK (188 aa)) is the RNase H type-2 domain. Positions 9, 10, and 101 each coordinate a divalent metal cation.

This sequence belongs to the RNase HII family. Mn(2+) serves as cofactor. Requires Mg(2+) as cofactor.

The protein localises to the cytoplasm. It catalyses the reaction Endonucleolytic cleavage to 5'-phosphomonoester.. Functionally, endonuclease that specifically degrades the RNA of RNA-DNA hybrids. The protein is Ribonuclease HII of Alteromonas mediterranea (strain DSM 17117 / CIP 110805 / LMG 28347 / Deep ecotype).